A 320-amino-acid polypeptide reads, in one-letter code: Malate dehydrogenase (320 aa).

Residues 10-15 (GSGMIG) and D34 contribute to the NAD(+) site. Substrate is bound by residues R83 and R89. Residues N96 and 119 to 121 (ITN) each bind NAD(+). The substrate site is built by N121 and R152. H176 (proton acceptor) is an active-site residue.

Belongs to the LDH/MDH superfamily. MDH type 3 family.

The catalysed reaction is (S)-malate + NAD(+) = oxaloacetate + NADH + H(+). In terms of biological role, catalyzes the reversible oxidation of malate to oxaloacetate. This Rhizobium johnstonii (strain DSM 114642 / LMG 32736 / 3841) (Rhizobium leguminosarum bv. viciae) protein is Malate dehydrogenase.